Here is a 210-residue protein sequence, read N- to C-terminus: Ribosomal RNA small subunit methyltransferase G (210 aa).

S-adenosyl-L-methionine contacts are provided by residues leucine 78, 124 to 125 (IE), and arginine 138.

It belongs to the methyltransferase superfamily. RNA methyltransferase RsmG family.

It localises to the cytoplasm. The enzyme catalyses guanosine(527) in 16S rRNA + S-adenosyl-L-methionine = N(7)-methylguanosine(527) in 16S rRNA + S-adenosyl-L-homocysteine. Functionally, specifically methylates the N7 position of guanine in position 527 of 16S rRNA. This chain is Ribosomal RNA small subunit methyltransferase G, found in Bordetella bronchiseptica (strain ATCC BAA-588 / NCTC 13252 / RB50) (Alcaligenes bronchisepticus).